We begin with the raw amino-acid sequence, 677 residues long: UvrABC system protein B (677 aa).

The Helicase ATP-binding domain occupies 24-412 (EGVLQGVPAQ…EGIVVEQVIR (389 aa)). 37–44 (GVTGSGKT) contributes to the ATP binding site. The short motif at 90–113 (YYDYYQPEAYLPNSDTYIEKDLAI) is the Beta-hairpin element. In terms of domain architecture, Helicase C-terminal spans 429-591 (QIDDLMEEIQ…ITPQQIKKAR (163 aa)). Positions 636 to 671 (EKSIERTRKLMQEAAKKLEFIEAAQYRNELLKLEDL) constitute a UVR domain.

The protein belongs to the UvrB family. As to quaternary structure, forms a heterotetramer with UvrA during the search for lesions. Interacts with UvrC in an incision complex.

It localises to the cytoplasm. Its function is as follows. The UvrABC repair system catalyzes the recognition and processing of DNA lesions. A damage recognition complex composed of 2 UvrA and 2 UvrB subunits scans DNA for abnormalities. Upon binding of the UvrA(2)B(2) complex to a putative damaged site, the DNA wraps around one UvrB monomer. DNA wrap is dependent on ATP binding by UvrB and probably causes local melting of the DNA helix, facilitating insertion of UvrB beta-hairpin between the DNA strands. Then UvrB probes one DNA strand for the presence of a lesion. If a lesion is found the UvrA subunits dissociate and the UvrB-DNA preincision complex is formed. This complex is subsequently bound by UvrC and the second UvrB is released. If no lesion is found, the DNA wraps around the other UvrB subunit that will check the other stand for damage. In Bacteroides thetaiotaomicron (strain ATCC 29148 / DSM 2079 / JCM 5827 / CCUG 10774 / NCTC 10582 / VPI-5482 / E50), this protein is UvrABC system protein B.